The sequence spans 196 residues: Orotate phosphoribosyltransferase (196 aa).

5-phospho-alpha-D-ribose 1-diphosphate contacts are provided by residues Arg-102, Lys-103, Lys-106, His-108, and Glu-129–Ser-137. 2 residues coordinate orotate: Thr-133 and Arg-161.

Belongs to the purine/pyrimidine phosphoribosyltransferase family. PyrE subfamily. In terms of assembly, homodimer. Mg(2+) serves as cofactor.

The enzyme catalyses orotidine 5'-phosphate + diphosphate = orotate + 5-phospho-alpha-D-ribose 1-diphosphate. Its pathway is pyrimidine metabolism; UMP biosynthesis via de novo pathway; UMP from orotate: step 1/2. In terms of biological role, catalyzes the transfer of a ribosyl phosphate group from 5-phosphoribose 1-diphosphate to orotate, leading to the formation of orotidine monophosphate (OMP). The chain is Orotate phosphoribosyltransferase from Prochlorococcus marinus (strain MIT 9303).